A 576-amino-acid chain; its full sequence is S-layer protein (576 aa).

The first 23 residues, 1–23 (KKIGAIAAGSAMVASALATGVFA), serve as a signal peptide directing secretion. N-linked (GlcNAc...) asparagine glycosylation is found at N102 and N132.

It belongs to the Mj S-layer protein family. In terms of processing, N-linked glycans consist of the 779 Da trisaccharide beta-ManNAc(Thr)-(1-4)-beta-GlcNAc3NAcA-(1-3)-beta-GlcNAc.

It is found in the secreted. The protein localises to the cell wall. Its subcellular location is the S-layer. In terms of biological role, S-layer protein. The S-layer is a paracrystalline mono-layered assembly of proteins which coat the surface of the cell. The sequence is that of S-layer protein (sla) from Methanococcus voltae.